The primary structure comprises 410 residues: Na(+)-translocating NADH-quinone reductase subunit B (410 aa).

Helical transmembrane passes span 56 to 76 (MMIL…YNVG), 119 to 139 (LFGA…GGFW), and 159 to 179 (SILF…ALGI). At threonine 232 the chain carries FMN phosphoryl threonine. Transmembrane regions (helical) follow at residues 266 to 286 (GSIG…IVFA), 293 to 313 (IIAG…FIGS), 318 to 338 (MFAM…GMLF), 347 to 367 (SFTN…CVLI), and 377 to 397 (GMML…YFVA).

It belongs to the NqrB/RnfD family. As to quaternary structure, composed of six subunits; NqrA, NqrB, NqrC, NqrD, NqrE and NqrF. Requires FMN as cofactor.

It localises to the cell inner membrane. The catalysed reaction is a ubiquinone + n Na(+)(in) + NADH + H(+) = a ubiquinol + n Na(+)(out) + NAD(+). In terms of biological role, NQR complex catalyzes the reduction of ubiquinone-1 to ubiquinol by two successive reactions, coupled with the transport of Na(+) ions from the cytoplasm to the periplasm. NqrA to NqrE are probably involved in the second step, the conversion of ubisemiquinone to ubiquinol. This Neisseria meningitidis serogroup B (strain ATCC BAA-335 / MC58) protein is Na(+)-translocating NADH-quinone reductase subunit B.